The primary structure comprises 266 residues: UPF0294 protein YafD (266 aa).

The protein belongs to the UPF0294 family.

It is found in the cytoplasm. The chain is UPF0294 protein YafD from Shigella dysenteriae serotype 1 (strain Sd197).